The primary structure comprises 456 residues: Chordin-like protein 1 (456 aa).

Positions 1–27 are cleaved as a signal peptide; sequence MRKKWKMGGMKYIFSLLFFLLLEGGKT. 2 VWFC domains span residues 35–100 and 113–179; these read TYCM…PRCP and KSCE…RVCR. N-linked (GlcNAc...) asparagine glycosylation occurs at Asn-118. A Cell attachment site motif is present at residues 179–181; the sequence is RGD. Positions 202 to 223 are disordered; sequence ARHSYHRSHYDPPPSRQAGGLS. The region spanning 258–323 is the VWFC 3 domain; it reads QVCVSNGKTY…IDGKCCKVCP (66 aa). Residue Asn-291 is glycosylated (N-linked (GlcNAc...) asparagine).

As to expression, expressed in the developing cornea and in the eye anterior segment in addition to the retina. Differentially expressed in the fetal brain. There is high expression in cerebellum and neocortex. Expressed in retinal pericytes.

It localises to the secreted. Functionally, antagonizes the function of BMP4 by binding to it and preventing its interaction with receptors. Alters the fate commitment of neural stem cells from gliogenesis to neurogenesis. Contributes to neuronal differentiation of neural stem cells in the brain by preventing the adoption of a glial fate. May play a crucial role in dorsoventral axis formation. May play a role in embryonic bone formation. May also play an important role in regulating retinal angiogenesis through modulation of BMP4 actions in endothelial cells. Plays a role during anterior segment eye development. The protein is Chordin-like protein 1 (CHRDL1) of Homo sapiens (Human).